The sequence spans 211 residues: N-(5'-phosphoribosyl)anthranilate isomerase (211 aa).

This sequence belongs to the TrpF family.

It carries out the reaction N-(5-phospho-beta-D-ribosyl)anthranilate = 1-(2-carboxyphenylamino)-1-deoxy-D-ribulose 5-phosphate. It participates in amino-acid biosynthesis; L-tryptophan biosynthesis; L-tryptophan from chorismate: step 3/5. The chain is N-(5'-phosphoribosyl)anthranilate isomerase from Pseudomonas aeruginosa (strain UCBPP-PA14).